The primary structure comprises 910 residues: Auxilin (910 aa).

Repeat copies occupy residues 33-36, 37-40, and 41-44. Residues 33–44 form a 3 X 4 AA approximate tandem repeats region; sequence NLKDNLKDTLKD. One can recognise a Phosphatase tensin-type domain in the interval 52 to 219; that stretch reads SVTSYTKGDL…GYMCDLLADK (168 aa). Ser-109 is subject to Phosphoserine. The active-site Phosphocysteine intermediate is Cys-161. One can recognise a C2 tensin-type domain in the interval 225 to 363; the sequence is FKPLTIKSIT…FQVTLDVELQ (139 aa). Positions 406 to 414 match the SH3-binding motif; it reads PIDIPPDNP. The disordered stretch occupies residues 448 to 772; that stretch reads QESEQSDDEL…RGKAAANLEG (325 aa). Residues Ser-450, Ser-453, Ser-560, and Ser-567 each carry the phosphoserine modification. A compositionally biased stretch (low complexity) spans 547–569; it reads PSGPTSTQSTPRRSATSTSASPT. The span at 596–626 shows a compositional bias: polar residues; sequence FLNTASASSDPFLQPTRSPSPTVHASSTPAV. Residues 651–666 are compositionally biased toward low complexity; the sequence is SAATSPTGSSHGTPTH. Residues 715–725 show a composition bias toward gly residues; the sequence is MGGGWQQGGGY. Residues 732-758 are compositionally biased toward polar residues; the sequence is SKPQSSMPHSSPQNRPNYNVSFSSMPG. The J domain occupies 846-910; that stretch reads TKWKPVGMAD…FENQGQKPLY (65 aa).

In terms of assembly, forms a complex composed of HSPA8, CLTC and DNAJC6. Interacts with HSPA8/HSC70 in an ATP-dependent manner; this interaction stimulates the HSPA8's ATPase activity. Interacts with CLTC; this interaction produces a local change in heavy-chain contacts, creating a detectable global distortion of the clathrin coat. Interacts with AP2A2. Interacts with DNM1(GTP-bound form); this interaction allows clathrin-coated vesicle (CCV) formation at the plasma membrane. The N-terminus is blocked. Post-translationally, phosphorylation at Ser-567 modulates its ability to bind CLTC and therefore the synaptic vesicle endocytosis (SVE). In terms of tissue distribution, brain.

The protein resides in the cytoplasmic vesicle. It localises to the clathrin-coated vesicle. May act as a protein phosphatase and/or a lipid phosphatase. Co-chaperone that recruits HSPA8/HSC70 to clathrin-coated vesicles (CCVs) and promotes the ATP-dependent dissociation of clathrin from CCVs and participates in clathrin-mediated endocytosis of synaptic vesicles and their recycling and also in intracellular trafficking. Firstly, binds tightly to the clathrin cages, at a ratio of one DNAJC6 per clathrin triskelion. The HSPA8:ATP complex then binds to the clathrin-auxilin cage, initially at a ratio of one HSPA8 per triskelion leading to ATP hydrolysis stimulation and causing a conformational change in the HSPA8. This cycle is repeated three times to drive to a complex containing the clathrin-auxilin cage associated to three HSPA8:ADP complex. The ATP hydrolysis of the third HSPA8:ATP complex leads to a concerted dismantling of the cage into component triskelia. Then, dissociates from the released triskelia and be recycled to initiate another cycle of HSPA8's recruitment. Also acts during the early steps of clathrin-coated vesicle (CCV) formation through its interaction with the GTP bound form of DNM1. This Bos taurus (Bovine) protein is Auxilin.